Consider the following 924-residue polypeptide: Hexokinase-3 (924 aa).

Residues 1 to 27 (MAAIEPSGLHPGERDSSCPQEGIPRPS) are disordered. Hexokinase domains follow at residues 27–471 (SGSL…MVTA) and 477–913 (ATHR…LVTR). The hexokinase small subdomain 1 stretch occupies residues 84-220 (HGTEQGDFLV…TYNIDVVAMV (137 aa)). Residue 95 to 102 (ELGATGAS) participates in ATP binding. 95–104 (ELGATGASLR) lines the D-glucose 6-phosphate pocket. Residues serine 168, 185–186 (TK), and 221–222 (ND) contribute to the D-glucose site. The hexokinase large subdomain 1 stretch occupies residues 221–460 (NDTVGTMMGC…CDVSFIPSVD (240 aa)). Aspartate 222 and threonine 245 together coordinate D-glucose 6-phosphate. D-glucose is bound by residues asparagine 248, glutamate 273, and 304-307 (QRFE). 426–428 (GGR) lines the D-glucose 6-phosphate pocket. ATP contacts are provided by residues 438–439 (CI) and 542–547 (DLGGTN). Residues 531–662 (DGSERGDFLA…AVELNVVAIV (132 aa)) are hexokinase small subdomain 2. 542 to 546 (DLGGT) is a D-glucose 6-phosphate binding site. D-glucose is bound by residues 610 to 611 (SF), 627 to 628 (TK), and 663 to 664 (ND). A hexokinase large subdomain 2 region spans residues 663 to 902 (NDTVGTMMSC…CTVTFLQSED (240 aa)). Residues aspartate 664 and threonine 687 each coordinate D-glucose 6-phosphate. Threonine 687 serves as a coordination point for ATP. Residues 689–690 (TN), glutamate 715, and glutamate 749 contribute to the D-glucose site. ATP-binding positions include 754-755 (GM), 791-795 (TKFLS), and 870-874 (TLYKL). D-glucose 6-phosphate-binding positions include 868–870 (DGT) and serine 904.

It belongs to the hexokinase family.

It carries out the reaction a D-hexose + ATP = a D-hexose 6-phosphate + ADP + H(+). The enzyme catalyses D-fructose + ATP = D-fructose 6-phosphate + ADP + H(+). The catalysed reaction is D-glucose + ATP = D-glucose 6-phosphate + ADP + H(+). The protein operates within carbohydrate metabolism; hexose metabolism. It functions in the pathway carbohydrate degradation; glycolysis; D-glyceraldehyde 3-phosphate and glycerone phosphate from D-glucose: step 1/4. Its activity is regulated as follows. Hexokinase is an allosteric enzyme inhibited by its product D-glucose 6-phosphate. Catalyzes the phosphorylation of hexose, such as D-glucose and D-fructose, to hexose 6-phosphate (D-glucose 6-phosphate and D-fructose 6-phosphate, respectively). Mediates the initial step of glycolysis by catalyzing phosphorylation of D-glucose to D-glucose 6-phosphate. The protein is Hexokinase-3 of Rattus norvegicus (Rat).